Here is a 352-residue protein sequence, read N- to C-terminus: Neutral protease 2 homolog ATEG_04941 (352 aa).

The signal sequence occupies residues 1–19 (MRFTALATAILPLACNVLA). The propeptide occupies 20–175 (LPAKTGEAPK…ASAVKPLDKR (156 aa)). 2 cysteine pairs are disulfide-bonded: Cys-181/Cys-253 and Cys-260/Cys-278. Residue His-303 participates in Zn(2+) binding. The active site involves Glu-304. His-307 and Asp-318 together coordinate Zn(2+).

It belongs to the peptidase M35 family. Zn(2+) is required as a cofactor.

Its subcellular location is the secreted. It catalyses the reaction Preferential cleavage of bonds with hydrophobic residues in P1'. Also 3-Asn-|-Gln-4 and 8-Gly-|-Ser-9 bonds in insulin B chain.. In terms of biological role, secreted metalloproteinase that allows assimilation of proteinaceous substrates. Shows high activities on basic nuclear substrates such as histone and protamine. In Aspergillus terreus (strain NIH 2624 / FGSC A1156), this protein is Neutral protease 2 homolog ATEG_04941.